Consider the following 418-residue polypeptide: Gamma-glutamyl phosphate reductase (418 aa).

Belongs to the gamma-glutamyl phosphate reductase family.

It localises to the cytoplasm. It catalyses the reaction L-glutamate 5-semialdehyde + phosphate + NADP(+) = L-glutamyl 5-phosphate + NADPH + H(+). The protein operates within amino-acid biosynthesis; L-proline biosynthesis; L-glutamate 5-semialdehyde from L-glutamate: step 2/2. Catalyzes the NADPH-dependent reduction of L-glutamate 5-phosphate into L-glutamate 5-semialdehyde and phosphate. The product spontaneously undergoes cyclization to form 1-pyrroline-5-carboxylate. The chain is Gamma-glutamyl phosphate reductase from Syntrophotalea carbinolica (strain DSM 2380 / NBRC 103641 / GraBd1) (Pelobacter carbinolicus).